Reading from the N-terminus, the 334-residue chain is Protein-glutamate methylesterase FrzG (334 aa).

The CheB-type methylesterase domain maps to 147–334 (PYPLVAIAAS…AALMQWVDVC (188 aa)). Catalysis depends on residues Ser156, His183, and Asp276.

It carries out the reaction [protein]-L-glutamate 5-O-methyl ester + H2O = L-glutamyl-[protein] + methanol + H(+). In terms of biological role, probable methylesterase. Required for the normal aggregation of M.xanthus cells during fruiting body formation. It is also a component of a sensory transduction pathway that controls the frequency at which cells reverse their gliding direction. It may remove the methyl group from the gamma-glutamyl methyl ester residues in FrzCD. This is Protein-glutamate methylesterase FrzG (frzG) from Myxococcus xanthus.